We begin with the raw amino-acid sequence, 458 residues long: Chromosomal replication initiator protein DnaA (458 aa).

Residues 1 to 93 (MKTELSEVWQ…NVIEDPAAEP (93 aa)) are domain I, interacts with DnaA modulators. Residues 94-119 (VDAPNVADLPAGTSAPAAEQNARLLG) are domain II. A domain III, AAA+ region region spans residues 120-336 (YINPKYTFET…GALTRVVAYA (217 aa)). Residues Gly-164, Gly-166, Lys-167, and Thr-168 each coordinate ATP. Residues 337–458 (NMLKCPLTYD…EQLIARIRAE (122 aa)) are domain IV, binds dsDNA.

It belongs to the DnaA family. As to quaternary structure, oligomerizes as a right-handed, spiral filament on DNA at oriC.

The protein localises to the cytoplasm. Plays an essential role in the initiation and regulation of chromosomal replication. ATP-DnaA binds to the origin of replication (oriC) to initiate formation of the DNA replication initiation complex once per cell cycle. Binds the DnaA box (a 9 base pair repeat at the origin) and separates the double-stranded (ds)DNA. Forms a right-handed helical filament on oriC DNA; dsDNA binds to the exterior of the filament while single-stranded (ss)DNA is stabiized in the filament's interior. The ATP-DnaA-oriC complex binds and stabilizes one strand of the AT-rich DNA unwinding element (DUE), permitting loading of DNA polymerase. After initiation quickly degrades to an ADP-DnaA complex that is not apt for DNA replication. Binds acidic phospholipids. The sequence is that of Chromosomal replication initiator protein DnaA from Symbiobacterium thermophilum (strain DSM 24528 / JCM 14929 / IAM 14863 / T).